The chain runs to 277 residues: Type IV methyl-directed restriction enzyme EcoKMcrA (277 aa).

The HNH domain maps to 207–257 (CENCGKNAPFYLNDGNPYLEVHHVIPLSSGGADTTDNCVALCPNCHRELHY).

In terms of biological role, restriction of 5-methyl and 5-hydroxymethylcytosines at the specific DNA sequence 5'-C(me)CGG-3'. The chain is Type IV methyl-directed restriction enzyme EcoKMcrA from Escherichia coli (strain K12).